We begin with the raw amino-acid sequence, 214 residues long: ATP phosphoribosyltransferase (214 aa).

Belongs to the ATP phosphoribosyltransferase family. Short subfamily. As to quaternary structure, heteromultimer composed of HisG and HisZ subunits.

The protein resides in the cytoplasm. It catalyses the reaction 1-(5-phospho-beta-D-ribosyl)-ATP + diphosphate = 5-phospho-alpha-D-ribose 1-diphosphate + ATP. The protein operates within amino-acid biosynthesis; L-histidine biosynthesis; L-histidine from 5-phospho-alpha-D-ribose 1-diphosphate: step 1/9. In terms of biological role, catalyzes the condensation of ATP and 5-phosphoribose 1-diphosphate to form N'-(5'-phosphoribosyl)-ATP (PR-ATP). Has a crucial role in the pathway because the rate of histidine biosynthesis seems to be controlled primarily by regulation of HisG enzymatic activity. The chain is ATP phosphoribosyltransferase from Ruminiclostridium cellulolyticum (strain ATCC 35319 / DSM 5812 / JCM 6584 / H10) (Clostridium cellulolyticum).